Here is a 402-residue protein sequence, read N- to C-terminus: Type II NADH:quinone oxidoreductase (402 aa).

FAD contacts are provided by residues 12–16, 39–40, and Val-83; these read GAGYA and NK. Residue Glu-172 is part of the active site. FAD contacts are provided by residues Asp-302, 319–320, and Lys-379; that span reads AQ.

It belongs to the NADH dehydrogenase family. Requires FAD as cofactor.

It localises to the cell membrane. It carries out the reaction a quinone + NADH + H(+) = a quinol + NAD(+). Its function is as follows. Alternative, nonproton pumping NADH:quinone oxidoreductase that delivers electrons to the respiratory chain by oxidation of NADH and reduction of quinones, and contributes to the regeneration of NAD(+). The protein is Type II NADH:quinone oxidoreductase of Staphylococcus aureus (strain bovine RF122 / ET3-1).